The following is a 289-amino-acid chain: Ribosomal RNA small subunit methyltransferase H (289 aa).

S-adenosyl-L-methionine is bound by residues 40–42 (GGH), Asp60, Phe84, Asp106, and Gln113.

The protein belongs to the methyltransferase superfamily. RsmH family.

It is found in the cytoplasm. The catalysed reaction is cytidine(1402) in 16S rRNA + S-adenosyl-L-methionine = N(4)-methylcytidine(1402) in 16S rRNA + S-adenosyl-L-homocysteine + H(+). In terms of biological role, specifically methylates the N4 position of cytidine in position 1402 (C1402) of 16S rRNA. This Haemophilus influenzae (strain PittGG) protein is Ribosomal RNA small subunit methyltransferase H.